A 478-amino-acid polypeptide reads, in one-letter code: uncharacterized protein (478 aa).

Residues 174 to 366 (RQVLAAAGVP…LIGEHIKLAI (193 aa)) enclose the ATP-grasp domain. Position 214 to 219 (214 to 219 (GSGSRG)) interacts with ATP. The active site involves Arg339.

This is an uncharacterized protein from Sinorhizobium fredii (strain NBRC 101917 / NGR234).